Reading from the N-terminus, the 293-residue chain is Small ribosomal subunit protein uS2 (293 aa).

The segment at 239-293 (PAGGADWEAAPAGFPAAATGEWSEAQPATWESGAAAATGPSTEWADSAPKDTAGW) is disordered. The span at 247 to 256 (AAPAGFPAAA) shows a compositional bias: low complexity.

The protein belongs to the universal ribosomal protein uS2 family. Component of the small ribosomal subunit. Mature ribosomes consist of a small (40S) and a large (60S) subunit. The 40S subunit contains about 33 different proteins and 1 molecule of RNA (18S). The 60S subunit contains about 49 different proteins and 3 molecules of RNA (25S, 5.8S and 5S). Interacts with RPS21.

Its subcellular location is the cytoplasm. Functionally, required for the assembly and/or stability of the 40S ribosomal subunit. Required for the processing of the 20S rRNA-precursor to mature 18S rRNA in a late step of the maturation of 40S ribosomal subunits. The sequence is that of Small ribosomal subunit protein uS2 from Chaetomium globosum (strain ATCC 6205 / CBS 148.51 / DSM 1962 / NBRC 6347 / NRRL 1970) (Soil fungus).